The primary structure comprises 513 residues: ATP synthase subunit alpha (513 aa).

169 to 176 (GDRQTGKT) contributes to the ATP binding site.

The protein belongs to the ATPase alpha/beta chains family. F-type ATPases have 2 components, CF(1) - the catalytic core - and CF(0) - the membrane proton channel. CF(1) has five subunits: alpha(3), beta(3), gamma(1), delta(1), epsilon(1). CF(0) has three main subunits: a(1), b(2) and c(9-12). The alpha and beta chains form an alternating ring which encloses part of the gamma chain. CF(1) is attached to CF(0) by a central stalk formed by the gamma and epsilon chains, while a peripheral stalk is formed by the delta and b chains.

Its subcellular location is the cell inner membrane. It carries out the reaction ATP + H2O + 4 H(+)(in) = ADP + phosphate + 5 H(+)(out). Its function is as follows. Produces ATP from ADP in the presence of a proton gradient across the membrane. The alpha chain is a regulatory subunit. In Shewanella amazonensis (strain ATCC BAA-1098 / SB2B), this protein is ATP synthase subunit alpha.